A 437-amino-acid polypeptide reads, in one-letter code: Lipid II isoglutaminyl synthase (glutamine-hydrolyzing) subunit MurT (437 aa).

Zn(2+) is bound by residues cysteine 202, cysteine 205, cysteine 224, and cysteine 226. The active site involves aspartate 349.

The protein belongs to the MurCDEF family. MurT subfamily. Forms a heterodimer with GatD.

It catalyses the reaction beta-D-GlcNAc-(1-&gt;4)-Mur2Ac(oyl-L-Ala-gamma-D-Glu-L-Lys-D-Ala-D-Ala)-di-trans,octa-cis-undecaprenyl diphosphate + L-glutamine + ATP + H2O = beta-D-GlcNAc-(1-&gt;4)-Mur2Ac(oyl-L-Ala-D-isoglutaminyl-L-Lys-D-Ala-D-Ala)-di-trans,octa-cis-undecaprenyl diphosphate + L-glutamate + ADP + phosphate + H(+). The catalysed reaction is beta-D-GlcNAc-(1-&gt;4)-Mur2Ac(oyl-L-Ala-gamma-D-Glu-L-Lys-D-Ala-D-Ala)-di-trans,octa-cis-undecaprenyl diphosphate + ATP = beta-D-GlcNAc-(1-&gt;4)-Mur2Ac(oyl-L-Ala-gamma-D-O-P-Glu-L-Lys-D-Ala-D-Ala)-di-trans,octa-cis-undecaprenyl diphosphate + ADP. The enzyme catalyses beta-D-GlcNAc-(1-&gt;4)-Mur2Ac(oyl-L-Ala-gamma-D-O-P-Glu-L-Lys-D-Ala-D-Ala)-di-trans,octa-cis-undecaprenyl diphosphate + NH4(+) = beta-D-GlcNAc-(1-&gt;4)-Mur2Ac(oyl-L-Ala-D-isoglutaminyl-L-Lys-D-Ala-D-Ala)-di-trans,octa-cis-undecaprenyl diphosphate + phosphate + H(+). It functions in the pathway cell wall biogenesis; peptidoglycan biosynthesis. Functionally, the lipid II isoglutaminyl synthase complex catalyzes the formation of alpha-D-isoglutamine in the cell wall lipid II stem peptide. The MurT subunit catalyzes the ATP-dependent amidation of D-glutamate residue of lipid II, converting it to an isoglutamine residue. The protein is Lipid II isoglutaminyl synthase (glutamine-hydrolyzing) subunit MurT of Staphylococcus aureus (strain N315).